The sequence spans 474 residues: Synaptotagmin-17 (474 aa).

The segment at Trp60–Leu112 is disordered. Residues Ser96–Leu112 show a composition bias toward low complexity. Phosphoserine is present on residues Ser118 and Ser119. 2 consecutive C2 domains span residues Gln184–Lys310 and Glu321–His455.

Belongs to the synaptotagmin family. As to expression, expressed abundantly in brain (frontal and temporal lobes, hippocampus, hypothalamus, amygdala, substantia nigra, and pituitary), kidney, and prostate. Expressed in fetal brain, kidney and lung. Expressed in melanocytes.

It is found in the membrane. Plays a role in dendrite formation by melanocytes. This chain is Synaptotagmin-17 (SYT17), found in Homo sapiens (Human).